The sequence spans 275 residues: Dermonecrotic toxin LamSicTox-alphaIV1iii (275 aa).

The active site involves His-5. Positions 25 and 27 each coordinate Mg(2+). Residue His-41 is the Nucleophile of the active site. Cystine bridges form between Cys-45–Cys-51 and Cys-47–Cys-192. Asp-85 is a binding site for Mg(2+).

It belongs to the arthropod phospholipase D family. Class II subfamily. It depends on Mg(2+) as a cofactor. As to expression, expressed by the venom gland.

The protein localises to the secreted. It carries out the reaction an N-(acyl)-sphingosylphosphocholine = an N-(acyl)-sphingosyl-1,3-cyclic phosphate + choline. The enzyme catalyses an N-(acyl)-sphingosylphosphoethanolamine = an N-(acyl)-sphingosyl-1,3-cyclic phosphate + ethanolamine. The catalysed reaction is a 1-acyl-sn-glycero-3-phosphocholine = a 1-acyl-sn-glycero-2,3-cyclic phosphate + choline. It catalyses the reaction a 1-acyl-sn-glycero-3-phosphoethanolamine = a 1-acyl-sn-glycero-2,3-cyclic phosphate + ethanolamine. Dermonecrotic toxins cleave the phosphodiester linkage between the phosphate and headgroup of certain phospholipids (sphingolipid and lysolipid substrates), forming an alcohol (often choline) and a cyclic phosphate. This toxin acts on sphingomyelin (SM). It may also act on ceramide phosphoethanolamine (CPE), lysophosphatidylcholine (LPC) and lysophosphatidylethanolamine (LPE), but not on lysophosphatidylserine (LPS), and lysophosphatidylglycerol (LPG). It acts by transphosphatidylation, releasing exclusively cyclic phosphate products as second products. Induces dermonecrosis, hemolysis, increased vascular permeability, edema, inflammatory response, and platelet aggregation. This is Dermonecrotic toxin LamSicTox-alphaIV1iii from Loxosceles amazonica (Recluse spider).